We begin with the raw amino-acid sequence, 283 residues long: MAEITASLVKELRERTGAGMMDCKKALTEANGDIELAIENMRKSGAIKAAKKAGNVAADGVIKTKIDGNVAFILEVNCQTDFVAKDAGFQAFADKVLDAAVAGKITDVEVLKAQFEEERVALVAKIGENINIRRVASLEGDVLGSYQHGARIGVLVAAKGADEELVKQLAMHVAASRPEFVKPEDVSADVVEKEYQVQLDIAMQSGKPKEIAEKMVEGRMKKFTGEVSLTGQPFVMEPSKSVGQLLKEHNADVTGFIRFEVGEGIEKVETDFAAEVAAMSKQS.

Residues 80–83 (TDFV) are involved in Mg(2+) ion dislocation from EF-Tu.

Belongs to the EF-Ts family.

The protein localises to the cytoplasm. In terms of biological role, associates with the EF-Tu.GDP complex and induces the exchange of GDP to GTP. It remains bound to the aminoacyl-tRNA.EF-Tu.GTP complex up to the GTP hydrolysis stage on the ribosome. In Salmonella gallinarum (strain 287/91 / NCTC 13346), this protein is Elongation factor Ts.